Here is a 147-residue protein sequence, read N- to C-terminus: Hemoglobin subunit gamma-2 (147 aa).

The Globin domain occupies 3-147; that stretch reads NFTAEDKAAI…VASALGSRYH (145 aa). A Phosphothreonine modification is found at Thr13. Phosphoserine is present on residues Ser45, Ser51, and Ser53. Lys60 is subject to N6-acetyllysine. A heme b-binding site is contributed by His64. Position 83 is an N6-acetyllysine (Lys83). Position 93 (His93) interacts with heme b. Cys94 is modified (S-nitrosocysteine). Residues Ser140 and Ser144 each carry the phosphoserine modification.

Belongs to the globin family. In terms of assembly, heterotetramer of two alpha chains and two gamma chains in fetal hemoglobin (Hb F). As to expression, red blood cells.

Its function is as follows. Gamma chains make up the fetal hemoglobin F, in combination with alpha chains. This chain is Hemoglobin subunit gamma-2 (HBG2), found in Cebus albifrons (White-fronted capuchin).